A 236-amino-acid polypeptide reads, in one-letter code: UPF0257 lipoprotein YnfC (236 aa).

An N-terminal signal peptide occupies residues 1–16 (MKKPLLLTLLCMILAG). The N-palmitoyl cysteine moiety is linked to residue Cys17. Cys17 carries S-diacylglycerol cysteine lipidation.

Belongs to the UPF0257 family.

The protein resides in the cell membrane. In Salmonella heidelberg (strain SL476), this protein is UPF0257 lipoprotein YnfC.